Here is a 250-residue protein sequence, read N- to C-terminus: 2,3-bisphosphoglycerate-dependent phosphoglycerate mutase (250 aa).

Substrate-binding positions include 8–15 (RHGQSAWN), 21–22 (TG), arginine 60, 87–90 (ERHY), lysine 98, 114–115 (RR), and 183–184 (GN). Histidine 9 (tele-phosphohistidine intermediate) is an active-site residue. Catalysis depends on glutamate 87, which acts as the Proton donor/acceptor.

It belongs to the phosphoglycerate mutase family. BPG-dependent PGAM subfamily. In terms of assembly, homodimer.

It catalyses the reaction (2R)-2-phosphoglycerate = (2R)-3-phosphoglycerate. It functions in the pathway carbohydrate degradation; glycolysis; pyruvate from D-glyceraldehyde 3-phosphate: step 3/5. Its function is as follows. Catalyzes the interconversion of 2-phosphoglycerate and 3-phosphoglycerate. The sequence is that of 2,3-bisphosphoglycerate-dependent phosphoglycerate mutase from Nitratidesulfovibrio vulgaris (strain ATCC 29579 / DSM 644 / CCUG 34227 / NCIMB 8303 / VKM B-1760 / Hildenborough) (Desulfovibrio vulgaris).